A 775-amino-acid chain; its full sequence is Tyrosine-protein phosphatase non-receptor type 12 (775 aa).

Met1 is modified (N-acetylmethionine). Phosphoserine is present on Ser19. Positions 28–293 (FARDFMRLRR…ELVHRAIAQL (266 aa)) constitute a Tyrosine-protein phosphatase domain. Substrate contacts are provided by residues Asp199, 231-237 (CSAGCGR), and Gln278. Cys231 (phosphocysteine intermediate) is an active-site residue. The segment at 322-341 (SSIDSEKQDSPPPKPPRTRS) is disordered. A phosphoserine mark is found at Ser331, Ser434, Ser448, and Ser467. Positions 344–437 (VEGDAKEEIL…KLERNLSFEI (94 aa)) are interaction with TGFB1I1. Residues 462–775 (KIKSASSSVV…GPREPPSEWT (314 aa)) form a disordered region. A Phosphothreonine modification is found at Thr519. Ser550 and Ser567 each carry phosphoserine. Over residues 558 to 573 (NHSQTLKTVSSTPNST) the composition is skewed to polar residues. Thr569 carries the phosphothreonine modification. Ser596 bears the Phosphoserine mark. Thr598 carries the post-translational modification Phosphothreonine. Phosphoserine occurs at positions 603, 606, 608, and 613. The span at 622–640 (TSISTASATVSPASSAESA) shows a compositional bias: low complexity. Ser673 is subject to Phosphoserine. Basic and acidic residues predominate over residues 692-711 (VRPEWHELPNQEWSEQRESE). Ser748 is modified (phosphoserine). The segment covering 766–775 (GPREPPSEWT) has biased composition (basic and acidic residues).

Belongs to the protein-tyrosine phosphatase family. Non-receptor class 4 subfamily. Interacts with PSTPIP1 and TGFB1I1. Interacts with PTK2B/PYK2. Interacts with LPXN. Interacts with SORBS2; this interaction greatly enhances WASF1 dephosphorylation and might mediate partial translocation to focal adhesion sites. Phosphorylated by STK24/MST3 and this results in inhibition of its activity.

Its subcellular location is the cytoplasm. It is found in the cell junction. The protein resides in the focal adhesion. The protein localises to the cell projection. It localises to the podosome. The catalysed reaction is O-phospho-L-tyrosyl-[protein] + H2O = L-tyrosyl-[protein] + phosphate. Its function is as follows. Dephosphorylates a range of proteins, and thereby regulates cellular signaling cascades. Dephosphorylates cellular tyrosine kinases, such as ERBB2 and PTK2B/PYK2, and thereby regulates signaling via ERBB2 and PTK2B/PYK2. Selectively dephosphorylates ERBB2 phosphorylated at 'Tyr-1112', 'Tyr-1196', and/or 'Tyr-1248'. The chain is Tyrosine-protein phosphatase non-receptor type 12 (Ptpn12) from Mus musculus (Mouse).